The chain runs to 125 residues: Small ribosomal subunit protein uS13 (125 aa).

A disordered region spans residues 95–125; that stretch reads GLPVNGQRTRTNARTRKGVKKTVANKKKATK. The segment covering 105 to 125 has biased composition (basic residues); sequence TNARTRKGVKKTVANKKKATK.

This sequence belongs to the universal ribosomal protein uS13 family. Part of the 30S ribosomal subunit. Forms a loose heterodimer with protein S19. Forms two bridges to the 50S subunit in the 70S ribosome.

In terms of biological role, located at the top of the head of the 30S subunit, it contacts several helices of the 16S rRNA. In the 70S ribosome it contacts the 23S rRNA (bridge B1a) and protein L5 of the 50S subunit (bridge B1b), connecting the 2 subunits; these bridges are implicated in subunit movement. Contacts the tRNAs in the A and P-sites. This Leptospira biflexa serovar Patoc (strain Patoc 1 / Ames) protein is Small ribosomal subunit protein uS13.